We begin with the raw amino-acid sequence, 2620 residues long: Ubiquitin carboxyl-terminal hydrolase 24 (2620 aa).

Residues 3 to 44 (SEEEQHMTTLLCMGFSDPATIRKALRLAKNDINEAVALLTNE) enclose the UBA domain. The interval 45 to 102 (RPGLDYGGYEPMDSGGGPSPGPGGGPRGDGGGDGGGGGPSRGGSTGGGGGFDPPPAYH) is disordered. Positions 58–95 (SGGGPSPGPGGGPRGDGGGDGGGGGPSRGGSTGGGGGF) are enriched in gly residues. A phosphoserine mark is found at Ser63 and Ser88. The residue at position 942 (Tyr942) is a Phosphotyrosine. Disordered stretches follow at residues 1034 to 1054 (TSGS…SSSS) and 1129 to 1151 (TLLS…QQHQ). Residues 1131 to 1151 (LSESSSQSSKSPSLSSKQQHQ) show a composition bias toward low complexity. Residues Ser1141 and Ser1285 each carry the phosphoserine modification. Positions 1689–2042 (VGLRNGGATC…NAYMLFYQRV (354 aa)) constitute a USP domain. The active-site Nucleophile is Cys1698. The segment at 1921-1945 (ARQDSSSEVGENGRSVDQGGGGSPR) is disordered. Ser1943 is modified (phosphoserine). His1970 acts as the Proton acceptor in catalysis. 3 positions are modified to phosphoserine: Ser2047, Ser2077, and Ser2561. The segment at 2063–2090 (AEDLSLSAPSSPEISPQSSPRPHRPNND) is disordered. The segment covering 2069–2082 (SAPSSPEISPQSSP) has biased composition (low complexity). A Phosphothreonine modification is found at Thr2565. Positions 2575–2620 (EKEQSGSSNGSESSPANENGDRHLQQGSESPMMIGELRSDLDDVDP) are disordered. Residues 2579–2592 (SGSSNGSESSPANE) show a composition bias toward low complexity. Ser2604 carries the phosphoserine modification. A compositionally biased stretch (basic and acidic residues) spans 2611-2620 (LRSDLDDVDP).

This sequence belongs to the peptidase C19 family. (Microbial infection) Interacts with human cytomegalovirus protein UL38.

It carries out the reaction Thiol-dependent hydrolysis of ester, thioester, amide, peptide and isopeptide bonds formed by the C-terminal Gly of ubiquitin (a 76-residue protein attached to proteins as an intracellular targeting signal).. In terms of biological role, ubiquitin-specific protease that regulates cell survival in various contexts through modulating the protein stability of some of its substrates including DDB2, MCL1 or TP53. Plays a positive role on ferritinophagy where ferritin is degraded in lysosomes and releases free iron. The chain is Ubiquitin carboxyl-terminal hydrolase 24 (USP24) from Homo sapiens (Human).